Here is a 184-residue protein sequence, read N- to C-terminus: Protein GrpE (184 aa).

This sequence belongs to the GrpE family. As to quaternary structure, homodimer.

The protein localises to the cytoplasm. Participates actively in the response to hyperosmotic and heat shock by preventing the aggregation of stress-denatured proteins, in association with DnaK and GrpE. It is the nucleotide exchange factor for DnaK and may function as a thermosensor. Unfolded proteins bind initially to DnaJ; upon interaction with the DnaJ-bound protein, DnaK hydrolyzes its bound ATP, resulting in the formation of a stable complex. GrpE releases ADP from DnaK; ATP binding to DnaK triggers the release of the substrate protein, thus completing the reaction cycle. Several rounds of ATP-dependent interactions between DnaJ, DnaK and GrpE are required for fully efficient folding. This is Protein GrpE from Pseudomonas putida (strain GB-1).